We begin with the raw amino-acid sequence, 191 residues long: Small ribosomal subunit protein uS5 (191 aa).

Residues 1-20 are disordered; it reads MAAERERGGRERSRDREERD. An S5 DRBM domain is found at 23–86; the sequence is FVDKLVHINR…EAAKRNLTRV (64 aa).

It belongs to the universal ribosomal protein uS5 family. Part of the 30S ribosomal subunit. Contacts proteins S4 and S8.

In terms of biological role, with S4 and S12 plays an important role in translational accuracy. Functionally, located at the back of the 30S subunit body where it stabilizes the conformation of the head with respect to the body. The sequence is that of Small ribosomal subunit protein uS5 from Rhodopseudomonas palustris (strain HaA2).